The sequence spans 190 residues: Frizzled-6 (190 aa).

An FZ domain is found at 1–20 (FGFAWPEELECSRLVNCDET). Over 1 to 89 (FGFAWPEELE…NYELDVAKSF (89 aa)) the chain is Extracellular. Residues 90 to 110 (IGIVSIFCLCATLFTFLTFLI) traverse the membrane as a helical segment. Residues 111-121 (DVKRFRYPERP) lie on the Cytoplasmic side of the membrane. A helical membrane pass occupies residues 122-142 (IIYYSVCYSIVSLMYFIGFLL). Residues 143–169 (GNRTACNKADDKLEIGETVVLGSQNKA) are Extracellular-facing. An N-linked (GlcNAc...) asparagine glycan is attached at N144. The helical transmembrane segment at 170–190 (CTVLFMVLYFFTMAGTIWWVI) threads the bilayer.

It belongs to the G-protein coupled receptor Fz/Smo family.

It localises to the membrane. It is found in the cell membrane. Its subcellular location is the cell surface. The protein resides in the apical cell membrane. The protein localises to the cytoplasmic vesicle membrane. Functionally, receptor for Wnt proteins. Most of frizzled receptors are coupled to the beta-catenin canonical signaling pathway, which leads to the activation of disheveled proteins, inhibition of GSK-3 kinase, nuclear accumulation of beta-catenin and activation of Wnt target genes. A second signaling pathway involving PKC and calcium fluxes has been seen for some family members, but it is not yet clear if it represents a distinct pathway or if it can be integrated in the canonical pathway, as PKC seems to be required for Wnt-mediated inactivation of GSK-3 kinase. Both pathways seem to involve interactions with G-proteins. Activation by Wnt5A stimulates PKC activity via a G-protein-dependent mechanism. Involved in transduction and intercellular transmission of polarity information during tissue morphogenesis and/or in differentiated tissues. Together with FZD3, may be involved in the neural tube closure and plays a role in the regulation of the establishment of planar cell polarity (PCP), particularly in the orientation of asymmetric bundles of stereocilia on the apical faces of a subset of auditory and vestibular sensory cells located in the inner ear. This chain is Frizzled-6 (FZD6), found in Gallus gallus (Chicken).